A 314-amino-acid chain; its full sequence is Porphobilinogen deaminase (314 aa).

At Cys-234 the chain carries S-(dipyrrolylmethanemethyl)cysteine.

The protein belongs to the HMBS family. In terms of assembly, monomer. Dipyrromethane serves as cofactor.

The catalysed reaction is 4 porphobilinogen + H2O = hydroxymethylbilane + 4 NH4(+). It functions in the pathway porphyrin-containing compound metabolism; protoporphyrin-IX biosynthesis; coproporphyrinogen-III from 5-aminolevulinate: step 2/4. In terms of biological role, tetrapolymerization of the monopyrrole PBG into the hydroxymethylbilane pre-uroporphyrinogen in several discrete steps. This Mycobacterium ulcerans (strain Agy99) protein is Porphobilinogen deaminase.